A 304-amino-acid polypeptide reads, in one-letter code: Cyclin-dependent kinase 3 (304 aa).

A Protein kinase domain is found at 4–286; that stretch reads FQKVEKIGEG…AKTALAHPYF (283 aa). ATP is bound by residues 10 to 18 and Lys33; that span reads IGEGTYGVV. Asp127 (proton acceptor) is an active-site residue.

This sequence belongs to the protein kinase superfamily. CMGC Ser/Thr protein kinase family. CDC2/CDKX subfamily. In terms of assembly, interacts with CABLES1 and ATF1. Binding to CCNC/cyclin-C promotes RB1 phosphorylation. Binds to CABLES2.

It catalyses the reaction L-seryl-[protein] + ATP = O-phospho-L-seryl-[protein] + ADP + H(+). It carries out the reaction L-threonyl-[protein] + ATP = O-phospho-L-threonyl-[protein] + ADP + H(+). Its function is as follows. Serine/threonine-protein kinase that plays a critical role in the control of the eukaryotic cell cycle; involved in G0-G1 and G1-S cell cycle transitions. Interacts with CCNC/cyclin-C during interphase. Phosphorylates histone H1, ATF1, RB1 and CABLES1. ATF1 phosphorylation triggers ATF1 transactivation and transcriptional activities, and promotes cell proliferation and transformation. CDK3/cyclin-C mediated RB1 phosphorylation is required for G0-G1 transition. Promotes G1-S transition probably by contributing to the activation of E2F1, E2F2 and E2F3 in a RB1-independent manner. This Mus musculus (Mouse) protein is Cyclin-dependent kinase 3 (Cdk3).